The primary structure comprises 209 residues: Probable phosphatidylglycerophosphatase, mitochondrial (209 aa).

A Phosphoryl acceptor motif is present at residues 57-61 (DKDNC).

The protein belongs to the GEP4 family.

It localises to the mitochondrion inner membrane. The catalysed reaction is a 1,2-diacyl-sn-glycero-3-phospho-(1'-sn-glycero-3'-phosphate) + H2O = a 1,2-diacyl-sn-glycero-3-phospho-(1'-sn-glycerol) + phosphate. The protein operates within phospholipid metabolism; phosphatidylglycerol biosynthesis; phosphatidylglycerol from CDP-diacylglycerol: step 2/2. Its function is as follows. Phosphatidylglycerophosphatase involved in the biosynthesis of cardiolipin (CL), a unique dimeric phosphoglycerolipid predominantly present in mitochondrial membranes and which has important functions for cellular energy metabolism, mitochondrial dynamics and the initiation of apoptotic pathways. The chain is Probable phosphatidylglycerophosphatase, mitochondrial (gep4) from Schizosaccharomyces pombe (strain 972 / ATCC 24843) (Fission yeast).